The following is a 178-amino-acid chain: Cell division protein SepF (178 aa).

Residues 19–45 are compositionally biased toward basic and acidic residues; the sequence is EHYESEHHTPHKDEDDSMEHDREERRA. The tract at residues 19–65 is disordered; that stretch reads EHYESEHHTPHKDEDDSMEHDREERRAPAPVREIARETPTPHAAEEE.

This sequence belongs to the SepF family. In terms of assembly, homodimer. Interacts with FtsZ.

The protein localises to the cytoplasm. Cell division protein that is part of the divisome complex and is recruited early to the Z-ring. Probably stimulates Z-ring formation, perhaps through the cross-linking of FtsZ protofilaments. Its function overlaps with FtsA. This is Cell division protein SepF from Arthrobacter sp. (strain FB24).